The primary structure comprises 700 residues: DNA ligase (700 aa).

NAD(+)-binding positions include 42-46, 91-92, and glutamate 126; these read DDEYD and SL. Lysine 128 functions as the N6-AMP-lysine intermediate in the catalytic mechanism. NAD(+)-binding residues include arginine 149, glutamate 184, lysine 300, and lysine 324. Positions 418, 421, 436, and 441 each coordinate Zn(2+). Residues 598–686 form the BRCT domain; it reads TRTDQLSGLN…GLGERGVAED (89 aa).

This sequence belongs to the NAD-dependent DNA ligase family. LigA subfamily. It depends on Mn(2+) as a cofactor.

The catalysed reaction is NAD(+) + (deoxyribonucleotide)n-3'-hydroxyl + 5'-phospho-(deoxyribonucleotide)m = (deoxyribonucleotide)n+m + AMP + beta-nicotinamide D-nucleotide.. Functionally, DNA ligase that catalyzes the formation of phosphodiester linkages between 5'-phosphoryl and 3'-hydroxyl groups in double-stranded DNA using NAD as a coenzyme and as the energy source for the reaction. It is essential for DNA replication and repair of damaged DNA. The sequence is that of DNA ligase from Deinococcus radiodurans (strain ATCC 13939 / DSM 20539 / JCM 16871 / CCUG 27074 / LMG 4051 / NBRC 15346 / NCIMB 9279 / VKM B-1422 / R1).